We begin with the raw amino-acid sequence, 398 residues long: Meiosis-specific protein SPO11 (398 aa).

Residues 40 to 175 enclose the Topo IIA-type catalytic domain; sequence CSNADVLAHI…LNIIPAQKGL (136 aa). Y135 functions as the O-(5'-phospho-DNA)-tyrosine intermediate in the catalytic mechanism. Residues E233 and D288 each coordinate Mg(2+).

This sequence belongs to the TOP6A family. Requires Mg(2+) as cofactor.

Its subcellular location is the nucleus. It localises to the chromosome. The enzyme catalyses ATP-dependent breakage, passage and rejoining of double-stranded DNA.. Its function is as follows. Required for meiotic recombination. Mediates DNA cleavage that forms the double-strand breaks (DSB) that initiate meiotic recombination. The action of SPO11 is important in setting off a regulatory chain of events encompassing 5' to 3' resection. When there are no SPO11-DSBs, resection of a site specific VDE-DSB takes place but it is faster than in wild-type meiosis and increases the risk of uncovering flanking homology. In Saccharomyces cerevisiae (strain ATCC 204508 / S288c) (Baker's yeast), this protein is Meiosis-specific protein SPO11 (SPO11).